A 200-amino-acid polypeptide reads, in one-letter code: Large ribosomal subunit protein bL25 (200 aa).

2 disordered regions span residues Met1–Arg20 and Pro179–Ala200.

This sequence belongs to the bacterial ribosomal protein bL25 family. CTC subfamily. As to quaternary structure, part of the 50S ribosomal subunit; part of the 5S rRNA/L5/L18/L25 subcomplex. Contacts the 5S rRNA. Binds to the 5S rRNA independently of L5 and L18.

Its function is as follows. This is one of the proteins that binds to the 5S RNA in the ribosome where it forms part of the central protuberance. The protein is Large ribosomal subunit protein bL25 of Azoarcus sp. (strain BH72).